The following is a 111-amino-acid chain: T cell receptor beta variable 20-1 (111 aa).

The first 15 residues, 1–15, serve as a signal peptide directing secretion; sequence MLLLLLLLGPGSGLG. In terms of domain architecture, Ig-like spans 16–111; that stretch reads AVVSQHPSRV…DSSFYICSAR (96 aa). The cysteines at positions 37 and 108 are disulfide-linked.

As to quaternary structure, alpha-beta TR is a heterodimer composed of an alpha and beta chain; disulfide-linked. The alpha-beta TR is associated with the transmembrane signaling CD3 coreceptor proteins to form the TR-CD3 (TcR or TCR). The assembly of alpha-beta TR heterodimers with CD3 occurs in the endoplasmic reticulum where a single alpha-beta TR heterodimer associates with one CD3D-CD3E heterodimer, one CD3G-CD3E heterodimer and one CD247 homodimer forming a stable octameric structure. CD3D-CD3E and CD3G-CD3E heterodimers preferentially associate with TR alpha and TR beta chains, respectively. The association of the CD247 homodimer is the last step of TcR assembly in the endoplasmic reticulum and is required for transport to the cell surface.

Its subcellular location is the cell membrane. In terms of biological role, v region of the variable domain of T cell receptor (TR) beta chain that participates in the antigen recognition. Alpha-beta T cell receptors are antigen specific receptors which are essential to the immune response and are present on the cell surface of T lymphocytes. Recognize peptide-major histocompatibility (MH) (pMH) complexes that are displayed by antigen presenting cells (APC), a prerequisite for efficient T cell adaptive immunity against pathogens. Binding of alpha-beta TR to pMH complex initiates TR-CD3 clustering on the cell surface and intracellular activation of LCK that phosphorylates the ITAM motifs of CD3G, CD3D, CD3E and CD247 enabling the recruitment of ZAP70. In turn ZAP70 phosphorylates LAT, which recruits numerous signaling molecules to form the LAT signalosome. The LAT signalosome propagates signal branching to three major signaling pathways, the calcium, the mitogen-activated protein kinase (MAPK) kinase and the nuclear factor NF-kappa-B (NF-kB) pathways, leading to the mobilization of transcription factors that are critical for gene expression and essential for T cell growth and differentiation. The T cell repertoire is generated in the thymus, by V-(D)-J rearrangement. This repertoire is then shaped by intrathymic selection events to generate a peripheral T cell pool of self-MH restricted, non-autoaggressive T cells. Post-thymic interaction of alpha-beta TR with the pMH complexes shapes TR structural and functional avidity. This Homo sapiens (Human) protein is T cell receptor beta variable 20-1.